The sequence spans 448 residues: Adenylosuccinate synthetase (448 aa).

Residues glycine 22 to lysine 28 and glycine 50 to threonine 52 each bind GTP. The active-site Proton acceptor is aspartate 23. Positions 23 and 50 each coordinate Mg(2+). IMP-binding positions include aspartate 23 to lysine 26, asparagine 48 to histidine 51, threonine 139, arginine 153, glutamine 234, threonine 249, and arginine 321. Histidine 51 acts as the Proton donor in catalysis. Serine 317–arginine 323 is a substrate binding site. Residues arginine 323, lysine 349–aspartate 351, and serine 431–glycine 433 contribute to the GTP site.

This sequence belongs to the adenylosuccinate synthetase family. As to quaternary structure, homodimer. Mg(2+) is required as a cofactor.

The protein resides in the cytoplasm. It carries out the reaction IMP + L-aspartate + GTP = N(6)-(1,2-dicarboxyethyl)-AMP + GDP + phosphate + 2 H(+). The protein operates within purine metabolism; AMP biosynthesis via de novo pathway; AMP from IMP: step 1/2. Plays an important role in the de novo pathway of purine nucleotide biosynthesis. Catalyzes the first committed step in the biosynthesis of AMP from IMP. The polypeptide is Adenylosuccinate synthetase (Paraburkholderia phytofirmans (strain DSM 17436 / LMG 22146 / PsJN) (Burkholderia phytofirmans)).